We begin with the raw amino-acid sequence, 258 residues long: Imidazole glycerol phosphate synthase subunit HisF (258 aa).

Residues Asp-11 and Asp-130 contribute to the active site.

This sequence belongs to the HisA/HisF family. As to quaternary structure, heterodimer of HisH and HisF.

It localises to the cytoplasm. The catalysed reaction is 5-[(5-phospho-1-deoxy-D-ribulos-1-ylimino)methylamino]-1-(5-phospho-beta-D-ribosyl)imidazole-4-carboxamide + L-glutamine = D-erythro-1-(imidazol-4-yl)glycerol 3-phosphate + 5-amino-1-(5-phospho-beta-D-ribosyl)imidazole-4-carboxamide + L-glutamate + H(+). Its pathway is amino-acid biosynthesis; L-histidine biosynthesis; L-histidine from 5-phospho-alpha-D-ribose 1-diphosphate: step 5/9. IGPS catalyzes the conversion of PRFAR and glutamine to IGP, AICAR and glutamate. The HisF subunit catalyzes the cyclization activity that produces IGP and AICAR from PRFAR using the ammonia provided by the HisH subunit. This is Imidazole glycerol phosphate synthase subunit HisF from Methylorubrum extorquens (strain CM4 / NCIMB 13688) (Methylobacterium extorquens).